A 355-amino-acid chain; its full sequence is G protein alpha i subunit (355 aa).

The N-myristoyl glycine moiety is linked to residue Gly-2. Cys-3 carries S-palmitoyl cysteine lipidation. Residues 33–355 (SEVKLLLLGA…KNNLKQIGLF (323 aa)) form the G-alpha domain. Residues 36–49 (KLLLLGAGESGKST) are G1 motif. Residues 41–48 (GAGESGKS), 176–182 (LRTRVKT), 201–205 (DVGGQ), 270–273 (NKKD), and Ala-327 contribute to the GTP site. 2 residues coordinate Mg(2+): Ser-48 and Thr-182. The tract at residues 174–182 (DVLRTRVKT) is G2 motif. Residues 197–206 (FKLFDVGGQR) are G3 motif. The segment at 266-273 (ILFLNKKD) is G4 motif. The segment at 325–330 (TCATDT) is G5 motif.

This sequence belongs to the G-alpha family. G(i/o/t/z) subfamily. In terms of assembly, g proteins are composed of 3 units; alpha, beta and gamma. The alpha chain contains the guanine nucleotide binding site. Interacts (via GDP- or GTP-bound forms) with loco (via GoLoco and RGS domains). Interacts with raps/pins.

It is found in the cell membrane. Its subcellular location is the apical cell membrane. Functionally, guanine nucleotide-binding proteins (G proteins) are involved as modulators or transducers in various transmembrane signaling systems. Plays a role in glial cell differentiation during embryogenesis; loco, Galphao and the G-protein coupled receptor, moody, are required in the surface glia to achieve effective insulation of the nerve cord. The polypeptide is G protein alpha i subunit (Galphai) (Drosophila melanogaster (Fruit fly)).